Here is a 478-residue protein sequence, read N- to C-terminus: Quinoprotein glucose dehydrogenase B (478 aa).

The signal sequence occupies residues 1–24; that stretch reads MNKHLLAKIALLSAVQLVTLSAFA. Positions 100 and 167 each coordinate D-glucose. Catalysis depends on His168, which acts as the Proton acceptor. Gln192 and Arg252 together coordinate D-glucose. The PQQ stretch occupies residues 252–253; that stretch reads RN. Gly271, Pro272, Glu277, Tyr287, Ala293, Tyr295, Asp297, and Glu333 together coordinate Ca(2+). Tyr367, Thr372, and Lys401 together coordinate pyrroloquinoline quinone. The PQQ stretch occupies residues 430 to 432; it reads RYR.

This sequence belongs to the PQQ oxidoreductase GdhB family. As to quaternary structure, homodimer. Requires pyrroloquinoline quinone as cofactor. Ca(2+) is required as a cofactor.

It carries out the reaction a ubiquinone + D-glucose = D-glucono-1,5-lactone + a ubiquinol. In terms of biological role, oxidizes glucose to gluconolactone. The protein is Quinoprotein glucose dehydrogenase B (gdhB) of Acinetobacter calcoaceticus.